The sequence spans 206 residues: Accelerated cell death 11 (206 aa).

An N-acylsphingoid base 1-phosphate is bound by residues Asp-60, Lys-64, Arg-99, Arg-103, and His-143.

The protein belongs to the GLTP family. As to quaternary structure, interacts with BPA1, PRA1F2 and PRA1F3.

It localises to the cytoplasm. Exhibits selective intermembrane transfer of ceramide-1-phosphate (C1P) and phytoceramide-1-phosphate. Does not transport ceramide (Cer) or GalCer, suggesting a requirement for phosphate in the headgroup for functionality. Transports in vitro sphingosine, but not glycosphingolipids. Also has some in vitro activity with sphingomyelin, a lipid not detected in plant tissues. The transport function may be not directly involved in regulating cell death. Rather, perturbations in the function of ACD11 or related components could be monitored by R-proteins, which then mediate defense and programmed cell death (PCD), as proposed in the guard hypothesis. C1P transfer is stimulated by phosphatidylserine in C1P source vesicles. Regulates autophagy, inflammasome mediated IL1B and IL18 processing, and pyroptosis, but not apoptosis. This chain is Accelerated cell death 11, found in Arabidopsis thaliana (Mouse-ear cress).